The primary structure comprises 330 residues: Putative 1-aminocyclopropane-1-carboxylate deaminase (330 aa).

Lys54 is modified (N6-(pyridoxal phosphate)lysine).

The protein belongs to the ACC deaminase/D-cysteine desulfhydrase family. It depends on pyridoxal 5'-phosphate as a cofactor.

It carries out the reaction 1-aminocyclopropane-1-carboxylate + H2O = 2-oxobutanoate + NH4(+). This chain is Putative 1-aminocyclopropane-1-carboxylate deaminase, found in Pyrococcus abyssi (strain GE5 / Orsay).